The chain runs to 185 residues: Pyridoxal 5'-phosphate synthase subunit PdxT (185 aa).

46 to 48 is an L-glutamine binding site; the sequence is GES. Cysteine 75 (nucleophile) is an active-site residue. Residues arginine 101 and 129–130 contribute to the L-glutamine site; that span reads IR. Catalysis depends on charge relay system residues histidine 165 and glutamate 167.

It belongs to the glutaminase PdxT/SNO family. In terms of assembly, in the presence of PdxS, forms a dodecamer of heterodimers. Only shows activity in the heterodimer.

It catalyses the reaction aldehydo-D-ribose 5-phosphate + D-glyceraldehyde 3-phosphate + L-glutamine = pyridoxal 5'-phosphate + L-glutamate + phosphate + 3 H2O + H(+). The enzyme catalyses L-glutamine + H2O = L-glutamate + NH4(+). It functions in the pathway cofactor biosynthesis; pyridoxal 5'-phosphate biosynthesis. In terms of biological role, catalyzes the hydrolysis of glutamine to glutamate and ammonia as part of the biosynthesis of pyridoxal 5'-phosphate. The resulting ammonia molecule is channeled to the active site of PdxS. The chain is Pyridoxal 5'-phosphate synthase subunit PdxT from Staphylococcus epidermidis (strain ATCC 12228 / FDA PCI 1200).